The following is a 226-amino-acid chain: uncharacterized protein (226 aa).

Residues 1-112 (MLVEDDHSIS…ELTARVKAAI (112 aa)) enclose the Response regulatory domain. Position 48 is a 4-aspartylphosphate (Asp-48). A DNA-binding region (ompR/PhoB-type) is located at residues 126 to 225 (NKVIRIHQLA…LWGIGYKLGE (100 aa)).

In terms of processing, phosphorylated by YcbM.

The protein localises to the cytoplasm. Its function is as follows. Member of the two-component regulatory system YcbM/YcbL. This is an uncharacterized protein from Bacillus subtilis (strain 168).